Reading from the N-terminus, the 205-residue chain is Urease accessory protein UreG (205 aa).

14–21 (GPVGSGKT) lines the GTP pocket.

Homodimer. UreD, UreF and UreG form a complex that acts as a GTP-hydrolysis-dependent molecular chaperone, activating the urease apoprotein by helping to assemble the nickel containing metallocenter of UreC. The UreE protein probably delivers the nickel.

The protein localises to the cytoplasm. Activation of apourease within the UreDFG-apoprotein complex is inhibited by zinc, copper and cobalt. Its function is as follows. Facilitates the functional incorporation of the urease nickel metallocenter. This process requires GTP hydrolysis, probably effectuated by UreG. The sequence is that of Urease accessory protein UreG from Klebsiella aerogenes (Enterobacter aerogenes).